Consider the following 390-residue polypeptide: Glutamyl-tRNA reductase (390 aa).

Residues 46–49 (TCNR), S96, 101–103 (EAQ), and Q107 each bind substrate. C47 serves as the catalytic Nucleophile. 176 to 181 (GAGEMA) lines the NADP(+) pocket.

The protein belongs to the glutamyl-tRNA reductase family. Homodimer.

It carries out the reaction (S)-4-amino-5-oxopentanoate + tRNA(Glu) + NADP(+) = L-glutamyl-tRNA(Glu) + NADPH + H(+). Its pathway is porphyrin-containing compound metabolism; protoporphyrin-IX biosynthesis; 5-aminolevulinate from L-glutamyl-tRNA(Glu): step 1/2. In terms of biological role, catalyzes the NADPH-dependent reduction of glutamyl-tRNA(Glu) to glutamate 1-semialdehyde (GSA). In Thermus thermophilus (strain ATCC BAA-163 / DSM 7039 / HB27), this protein is Glutamyl-tRNA reductase.